The sequence spans 481 residues: Phenylalanine--tRNA ligase alpha subunit (481 aa).

L-phenylalanine contacts are provided by residues threonine 322, 361–363 (QLE), and tyrosine 401. Glutamate 403 serves as a coordination point for Mg(2+). Phenylalanine 426 contributes to the L-phenylalanine binding site.

The protein belongs to the class-II aminoacyl-tRNA synthetase family. Phe-tRNA synthetase alpha subunit type 2 subfamily. As to quaternary structure, tetramer of two alpha and two beta subunits. Requires Mg(2+) as cofactor.

The protein localises to the cytoplasm. It catalyses the reaction tRNA(Phe) + L-phenylalanine + ATP = L-phenylalanyl-tRNA(Phe) + AMP + diphosphate + H(+). This Methanoculleus marisnigri (strain ATCC 35101 / DSM 1498 / JR1) protein is Phenylalanine--tRNA ligase alpha subunit.